The chain runs to 267 residues: DNA repair protein RecO (267 aa).

This sequence belongs to the RecO family.

Functionally, involved in DNA repair and RecF pathway recombination. In Prochlorococcus marinus (strain MIT 9303), this protein is DNA repair protein RecO.